A 188-amino-acid chain; its full sequence is Small ribosomal subunit protein uS7 (188 aa).

The protein belongs to the universal ribosomal protein uS7 family. As to quaternary structure, part of the 30S ribosomal subunit.

In terms of biological role, one of the primary rRNA binding proteins, it binds directly to 16S rRNA where it nucleates assembly of the head domain of the 30S subunit. Is located at the subunit interface close to the decoding center. This is Small ribosomal subunit protein uS7 from Methanococcus maripaludis (strain DSM 14266 / JCM 13030 / NBRC 101832 / S2 / LL).